The chain runs to 1088 residues: METLTELGDELTLGDIDEMLQFVSNQVGEFPDLFEEQLCQSYQGNNAMDTTLPKAYNQAAQQPYTTSAPQPQLLPVKAPPQATPQRTAPLLQPRPVVQTSPQPQLQQQTVMLTPNFSTAPQTRIIQQPLIYQNAATTSFQVLQPPVQSLMTTQQMQPVTIQQQVQTVQAQRVLTQAANGTIQTLTPATVQTVTPHVQQVPVLVQPQIIKTESLVLTAVKADGSPVMTAVQNPAITTLAGTLQTTALQVPTLMGSNGTILTTMPVMMGQEKMPIKQVPGSLKLAEVPKEGERRTTHNIIEKRYRSSINDKIMELKDLVMGTDAKMHKSGVLKKAIDYIKYLQQVNQKLRQENMALKLANQKNKYLKGIDLSSLVDTSIGMKIDEFNQNALMMSPPASDSGSPAVFSPYSVDSEPGSPLLDDEKVKDEPDSPTGLGMMDRSRMLLCTMTFLCLSFNPLTSLLHPESGQYSERAVQHGTGRTMLGVEMSGFYGSWFDWLIPTIILWLVNGVIVLSVFMKLLIHGEPVTRLHSRSSVKFWRHRKQADLDLAKGDFGAAALNLQTCLCVLGRSLPATRLDLACSLSWNIIRCSLQKISLVRWLLKHSPGYCKKAEFQDEATTSARDAALVYHKLHQLHLTGKLPSNWNCSGLNLALCAVNLAECAGNKISPTLLAEIHLTTAIQMKTSFPSRFRFLTAYFLGYAQNASSEETLPDPMRWLAHPLGKYFFINSNWALKSAAKDSLYTSTRNPANPVTQIHRAFCESLLEKAMYTMAKPETSKAASEEESCEFSRAQEYLKLLSGFADSVGNVASLPLGGSSPMSSADPICRWWYSVSSMAIGWLQGDDSVVKSHFAEVERIPKLLDSDNPLVKAVIHMCRAMQAAVLGKCDGQQNSFYHCEKASAFLWNSLNISSTGNTNLNKVVQLLICDLLLSLRTSLWQKQSSSPAAGDSIHAPTPALTGFQRDLSSLRRLSLTFKPAHCKLFLHEATVRLMADASPTRTHQLLQHSLQKCTALANKQGDLDSLPGQRERATAILLACRHLPLSFLSSPGQRAIMLAEAARTLEKVGDRRSYHDCQQMMVKLSGGTAMAAS.

A transcriptional activation (acidic) region spans residues Met-1–Leu-38. Over Met-1–Arg-440 the chain is Cytoplasmic. The span at Ala-59–Gln-70 shows a compositional bias: polar residues. A disordered region spans residues Ala-59–Thr-87. The 51-residue stretch at Glu-290–Leu-340 folds into the bHLH domain. The leucine-zipper stretch occupies residues Leu-340 to Asn-361. The segment at Ser-392–Thr-431 is disordered. A helical transmembrane segment spans residues Met-441 to His-461. The Lumenal portion of the chain corresponds to Pro-462 to Asp-494. A helical membrane pass occupies residues Trp-495–Met-515. Over Lys-516 to Ser-1088 the chain is Cytoplasmic.

It belongs to the SREBP family. Forms a tight complex with scap, the SCAP-SREBP complex, in the endoplasmic reticulum membrane. In terms of assembly, homodimer; efficient DNA binding of the soluble transcription factor fragment requires dimerization with another bHLH protein. Processed in the Golgi apparatus, releasing the protein from the membrane. At low cholesterol the SCAP-SREBP complex is recruited into COPII vesicles for export from the endoplasmic reticulum. In the Golgi, complex SREBPs are cleaved sequentially by site-1 (MBTPS1, S1P) and site-2 (MBTPS2, S2P) proteases. The first cleavage by site-1 protease occurs within the luminal loop, the second cleavage by site-2 protease occurs within the first transmembrane domain, releasing the transcription factor from the Golgi membrane.

It localises to the endoplasmic reticulum membrane. It is found in the golgi apparatus membrane. Its subcellular location is the cytoplasmic vesicle. The protein resides in the COPII-coated vesicle membrane. The protein localises to the nucleus. In terms of biological role, precursor of the transcription factor form (Processed sterol regulatory element-binding protein 2), which is embedded in the endoplasmic reticulum membrane. Low sterol concentrations promote processing of this form, releasing the transcription factor form that translocates into the nucleus and activates transcription of genes involved in cholesterol biosynthesis. Functionally, key transcription factor that regulates expression of genes involved in cholesterol biosynthesis. Binds to the sterol regulatory element 1 (SRE-1) (5'-ATCACCCCAC-3'). Has dual sequence specificity binding to both an E-box motif (5'-ATCACGTGA-3') and to SRE-1 (5'-ATCACCCCAC-3'). Regulates transcription of genes related to cholesterol synthesis pathway. This is Sterol regulatory element-binding protein 2 from Xenopus laevis (African clawed frog).